We begin with the raw amino-acid sequence, 490 residues long: Betaine aldehyde dehydrogenase (490 aa).

K(+) is bound by residues T26, I27, and D93. Position 150-152 (G150–W152) interacts with NAD(+). K162 functions as the Charge relay system in the catalytic mechanism. Residue K176–E179 participates in NAD(+) binding. Residue V180 coordinates K(+). G230 to S233 lines the NAD(+) pocket. L246 serves as a coordination point for K(+). The active-site Proton acceptor is E252. NAD(+)-binding residues include G254, C286, and E387. C286 (nucleophile) is an active-site residue. Position 286 is a cysteine sulfenic acid (-SOH) (C286). The K(+) site is built by K457 and G460. E464 functions as the Charge relay system in the catalytic mechanism.

Belongs to the aldehyde dehydrogenase family. Dimer of dimers. K(+) serves as cofactor.

It carries out the reaction betaine aldehyde + NAD(+) + H2O = glycine betaine + NADH + 2 H(+). It functions in the pathway amine and polyamine biosynthesis; betaine biosynthesis via choline pathway; betaine from betaine aldehyde: step 1/1. Involved in the biosynthesis of the osmoprotectant glycine betaine. Catalyzes the irreversible oxidation of betaine aldehyde to the corresponding acid. The chain is Betaine aldehyde dehydrogenase from Escherichia coli O6:H1 (strain CFT073 / ATCC 700928 / UPEC).